Here is a 160-residue protein sequence, read N- to C-terminus: Large ribosomal subunit protein bL19 (160 aa).

Basic and acidic residues-rich tracts occupy residues 1–15 (MTED…KEES) and 28–39 (ATRETKPKDSPS). The disordered stretch occupies residues 1–44 (MTEDLKNTSPSKEESNEIEESSKATPKATRETKPKDSPSKTKLS).

Belongs to the bacterial ribosomal protein bL19 family.

This protein is located at the 30S-50S ribosomal subunit interface and may play a role in the structure and function of the aminoacyl-tRNA binding site. In Prochlorococcus marinus (strain SARG / CCMP1375 / SS120), this protein is Large ribosomal subunit protein bL19.